We begin with the raw amino-acid sequence, 546 residues long: CTP synthase (546 aa).

An amidoligase domain region spans residues 1–266 (MTTNYIFVTG…DDLVCTRFGI (266 aa)). S14 is a CTP binding site. S14 lines the UTP pocket. ATP contacts are provided by residues 15–20 (SLGKGI) and D72. Residues D72 and E140 each contribute to the Mg(2+) site. CTP-binding positions include 147–149 (DIE), 187–192 (KTKPTQ), and K223. UTP contacts are provided by residues 187 to 192 (KTKPTQ) and K223. ATP is bound at residue 239–241 (KDV). One can recognise a Glutamine amidotransferase type-1 domain in the interval 291 to 542 (TIGMVGKYIE…VKAAGQYSRG (252 aa)). G352 provides a ligand contact to L-glutamine. C379 (nucleophile; for glutamine hydrolysis) is an active-site residue. L-glutamine-binding positions include 380 to 383 (LGMQ), E403, and R470. Active-site residues include H515 and E517.

This sequence belongs to the CTP synthase family. Homotetramer.

The enzyme catalyses UTP + L-glutamine + ATP + H2O = CTP + L-glutamate + ADP + phosphate + 2 H(+). The catalysed reaction is L-glutamine + H2O = L-glutamate + NH4(+). It catalyses the reaction UTP + NH4(+) + ATP = CTP + ADP + phosphate + 2 H(+). The protein operates within pyrimidine metabolism; CTP biosynthesis via de novo pathway; CTP from UDP: step 2/2. Allosterically activated by GTP, when glutamine is the substrate; GTP has no effect on the reaction when ammonia is the substrate. The allosteric effector GTP functions by stabilizing the protein conformation that binds the tetrahedral intermediate(s) formed during glutamine hydrolysis. Inhibited by the product CTP, via allosteric rather than competitive inhibition. Functionally, catalyzes the ATP-dependent amination of UTP to CTP with either L-glutamine or ammonia as the source of nitrogen. Regulates intracellular CTP levels through interactions with the four ribonucleotide triphosphates. This is CTP synthase from Vibrio parahaemolyticus serotype O3:K6 (strain RIMD 2210633).